Reading from the N-terminus, the 622-residue chain is Probable potassium transport system protein Kup (622 aa).

Transmembrane regions (helical) follow at residues 9-29, 52-72, 101-121, 137-157, 169-189, 213-233, 247-267, 287-309, 337-357, 363-383, 396-416, and 419-439; these read LPAVTLAAIGVVYGDIGTSPL, FLSLIFWALILVVSVKYLAFV, VLLVLGLIGGGFFYGEVVITP, PALTPYILPVAIAVLTALFVI, FGPVMLLWFFSLGTLGAISIF, VAFFSLGSVVLAITGVEALYA, WFTVALPALLLNYFGQGALIL, FPMVILSTMATVIASQAVISGVF, IYIPFVNWMLYIAVLIVVVTF, LAAAYGIAVTGTMVITTILAC, VVKIILISLLLIDVPLFLANV, and FFAGGWLPVMLGAIMFMVMAT.

Belongs to the HAK/KUP transporter (TC 2.A.72) family.

It is found in the cell inner membrane. The catalysed reaction is K(+)(in) + H(+)(in) = K(+)(out) + H(+)(out). Its function is as follows. Transport of potassium into the cell. Likely operates as a K(+):H(+) symporter. This Tolumonas auensis (strain DSM 9187 / NBRC 110442 / TA 4) protein is Probable potassium transport system protein Kup.